Consider the following 256-residue polypeptide: DNA repair protein RecO (256 aa).

Belongs to the RecO family.

Involved in DNA repair and RecF pathway recombination. The chain is DNA repair protein RecO from Anaeromyxobacter sp. (strain Fw109-5).